Reading from the N-terminus, the 96-residue chain is Pollen allergen Dac g 3 (96 aa).

An Expansin-like CBD domain is found at 14 to 94 (KKLVLDIKYT…AFKIGTTYTP (81 aa)).

The protein belongs to the expansin family. Expansin B subfamily.

The protein resides in the secreted. The polypeptide is Pollen allergen Dac g 3 (Dactylis glomerata (Orchard grass)).